The primary structure comprises 312 residues: 2,3-dihydroxyphenylpropionate/2,3-dihydroxicinnamic acid 1,2-dioxygenase 1 (312 aa).

The Proton donor role is filled by histidine 115. Histidine 179 acts as the Proton acceptor in catalysis.

It belongs to the LigB/MhpB extradiol dioxygenase family. Homotetramer. It depends on Fe(2+) as a cofactor.

It catalyses the reaction 3-(2,3-dihydroxyphenyl)propanoate + O2 = (2Z,4E)-2-hydroxy-6-oxonona-2,4-dienedioate + H(+). It carries out the reaction (2E)-3-(2,3-dihydroxyphenyl)prop-2-enoate + O2 = (2Z,4E,7E)-2-hydroxy-6-oxonona-2,4,7-trienedioate + H(+). It functions in the pathway aromatic compound metabolism; 3-phenylpropanoate degradation. Catalyzes the non-heme iron(II)-dependent oxidative cleavage of 2,3-dihydroxyphenylpropionic acid and 2,3-dihydroxicinnamic acid into 2-hydroxy-6-ketononadienedioate and 2-hydroxy-6-ketononatrienedioate, respectively. The chain is 2,3-dihydroxyphenylpropionate/2,3-dihydroxicinnamic acid 1,2-dioxygenase 1 from Dechloromonas aromatica (strain RCB).